The following is a 137-amino-acid chain: Large ribosomal subunit protein uL16 (137 aa).

Positions 1–17 are enriched in basic residues; sequence MLSPKRVKFRKRQRGRL. The tract at residues 1–24 is disordered; it reads MLSPKRVKFRKRQRGRLKGTDERG.

The protein belongs to the universal ribosomal protein uL16 family. Part of the 50S ribosomal subunit.

Binds 23S rRNA and is also seen to make contacts with the A and possibly P site tRNAs. The protein is Large ribosomal subunit protein uL16 of Leptospira borgpetersenii serovar Hardjo-bovis (strain JB197).